We begin with the raw amino-acid sequence, 180 residues long: Large ribosomal subunit protein uL5 (180 aa).

This sequence belongs to the universal ribosomal protein uL5 family. As to quaternary structure, part of the 50S ribosomal subunit; part of the 5S rRNA/L5/L18/L25 subcomplex. Contacts the 5S rRNA and the P site tRNA. Forms a bridge to the 30S subunit in the 70S ribosome.

In terms of biological role, this is one of the proteins that bind and probably mediate the attachment of the 5S RNA into the large ribosomal subunit, where it forms part of the central protuberance. In the 70S ribosome it contacts protein S13 of the 30S subunit (bridge B1b), connecting the 2 subunits; this bridge is implicated in subunit movement. Contacts the P site tRNA; the 5S rRNA and some of its associated proteins might help stabilize positioning of ribosome-bound tRNAs. The polypeptide is Large ribosomal subunit protein uL5 (Chloroflexus aggregans (strain MD-66 / DSM 9485)).